Reading from the N-terminus, the 598-residue chain is Arylsulfate sulfotransferase AssT (598 aa).

The signal sequence occupies residues 1–27 (MFHPYRKTLLSGTVALALGLFATGAIA). 2 residues coordinate 4-methylumbelliferone: histidine 279 and histidine 383. A disulfide bridge links cysteine 445 with cysteine 451. Histidine 463 is a binding site for 4-methylumbelliferone. Histidine 463 acts as the Nucleophile; sulfurylated histidine covalent intermediate in catalysis.

This sequence belongs to the aryl sulfotransferase family. Monomer.

It localises to the periplasm. The catalysed reaction is an aryl sulfate + a phenol = an aryl sulfate + a phenol. It catalyses the reaction 4-methylumbelliferone sulfate + phenol = phenyl sulfate + 4-methylumbelliferone. The enzyme catalyses 2-naphthyl sulfate + phenol = phenyl sulfate + 2-naphthol. Functionally, catalyzes the transfer of a sulfate group from a phenyl sulfate ester to other phenolic compounds. Is able to use several substrate donors and acceptors in vitro: using phenol as an acceptor substrate, 4-methylumbelliferyl sulfate is the best donor substrate, followed by beta-naphthyl sulfate, p-nitrophenyl sulfate (PNS), and alpha-naphthyl sulfate; using PNS as a donor substrate, alpha-naphthol is the best acceptor substrate, followed by phenol, resorcinol, p-acetaminophen, tyramine, and tyrosine. Cannot use 3'-phosphoadenosine-5'-phophosulfate (PAPS), the donor substrate of mammalian sulfotransferase. May be a detoxifying enzyme, converting toxic phenolic compounds into non-toxic materials. This chain is Arylsulfate sulfotransferase AssT, found in Lelliottia amnigena (Enterobacter amnigenus).